Here is a 1227-residue protein sequence, read N- to C-terminus: MGDTSEDASIHRLEGTDLDCQVGGLICKSKSAASEQHVFKAPAPRPSLLGLDLLASLKRREREEKDDGEDKKKSKVSSYKDWEESKDDQKDAEEEGGDQAGQNIRKDRHYRSARVETPSHPGGVSEEFWERSRQRERERREHGVYASSKEEKDWKKEKSRDRDYDRKRDRDERDRSRHSSRSERDGGSERSSRRNEPESPRHRPKDAATPSRSTWEEEDSGYGSSRRSQWESPSPTPSYRDSERSHRLSTRDRDRSVRGKYSDDTPLPTPSYKYNEWADDRRHLGSTPRLSRGRGRREEGEEGISFDTEEERQQWEDDQRQADRDWYMMDEGYDEFHNPLAYSSEDYVRRREQHLHKQKQKRISAQRRQINEDNERWETNRMLTSGVVHRLEVDEDFEEDNAAKVHLMVHNLVPPFLDGRIVFTKQPEPVIPVKDATSDLAIIARKGSQTVRKHREQKERKKAQHKHWELAGTKLGDIMGVKKEEEPDKAVTEDGKVDYRTEQKFADHMKRKSEASSEFAKKKSILEQRQYLPIFAVQQELLTIIRDNSIVIVVGETGSGKTTQLTQYLHEDGYTDYGMIGCTQPRRVAAMSVAKRVSEEMGGNLGEEVGYAIRFEDCTSENTLIKYMTDGILLRESLREADLDHYSAIIMDEAHERSLNTDVLFGLLREVVARRSDLKLIVTSATMDAEKFAAFFGNVPIFHIPGRTFPVDILFSKTPQEDYVEAAVKQSLQVHLSGAPGDILIFMPGQEDIEVTSDQIVEHLEELENAPALAVLPIYSQLPSDLQAKIFQKAPDGVRKCIVATNIAETSLTVDGIMFVIDSGYCKLKVFNPRIGMDALQIYPISQANANQRSGRAGRTGPGQCFRLYTQSAYKNELLTTTVPEIQRTNLANVVLLLKSLGVQDLLQFHFMDPPPEDNMLNSMYQLWILGALDNTGGLTSTGRLMVEFPLDPALSKMLIVSCDMGCSSEILLIVSMLSVPAIFYRPKGREEESDQIREKFAVPESDHLTYLNVYLQWKNNNYSTIWCNDHFIHAKAMRKVREVRAQLKDIMVQQRMSLASCGTDWDIVRKCICAAYFHQAAKLKGIGEYVNIRTGMPCHLHPTSSLFGMGYTPDYIVYHELVMTTKEYMQCVTAVDGEWLAELGPMFYSVKQAGKSRQENRRRAKEEASAMEEEMALAEEQLRARRQEQEKRSPLGSVRSTKIYTPGRKEQGEPMTPRRTPARFGL.

Gly2 carries the N-acetylglycine modification. Ser56 is modified (phosphoserine). Over residues 60-89 the composition is skewed to basic and acidic residues; that stretch reads REREEKDDGEDKKKSKVSSYKDWEESKDDQ. A disordered region spans residues 60–320; the sequence is REREEKDDGE…ERQQWEDDQR (261 aa). A Phosphothreonine modification is found at Thr117. The segment covering 128-201 has biased composition (basic and acidic residues); sequence FWERSRQRER…SRRNEPESPR (74 aa). 2 positions are modified to phosphoserine: Ser199 and Ser224. Residues 222 to 239 are compositionally biased toward polar residues; it reads YGSSRRSQWESPSPTPSY. The segment covering 240–263 has biased composition (basic and acidic residues); it reads RDSERSHRLSTRDRDRSVRGKYSD. Lys260 carries the N6-acetyllysine modification. The segment covering 300-310 has biased composition (acidic residues); it reads GEEGISFDTEE. A compositionally biased stretch (basic and acidic residues) spans 311–320; it reads ERQQWEDDQR. Glycyl lysine isopeptide (Lys-Gly) (interchain with G-Cter in SUMO2) cross-links involve residues Lys482, Lys483, and Lys504. One can recognise a Helicase ATP-binding domain in the interval 542 to 705; the sequence is LTIIRDNSIV…FGNVPIFHIP (164 aa). An ATP-binding site is contributed by 555–562; it reads GETGSGKT. Residues 652–655 carry the DEAH box motif; it reads DEAH. The region spanning 727 to 902 is the Helicase C-terminal domain; that stretch reads AVKQSLQVHL…NVVLLLKSLG (176 aa). The segment at 1155-1227 is disordered; sequence GKSRQENRRR…PRRTPARFGL (73 aa). Basic and acidic residues-rich tracts occupy residues 1157–1169 and 1181–1194; these read SRQENRRRAKEEA and EQLRARRQEQEKRS. Lys1166 participates in a covalent cross-link: Glycyl lysine isopeptide (Lys-Gly) (interchain with G-Cter in SUMO2). At Ser1194 the chain carries Phosphoserine.

This sequence belongs to the DEAD box helicase family. DEAH subfamily. PRP16 sub-subfamily. Identified in the spliceosome C complex.

The protein resides in the nucleus. It catalyses the reaction ATP + H2O = ADP + phosphate + H(+). Its function is as follows. Probable ATP-binding RNA helicase. Involved in pre-mRNA splicing as component of the spliceosome. This Homo sapiens (Human) protein is Pre-mRNA-splicing factor ATP-dependent RNA helicase PRP16 (DHX38).